The following is a 226-amino-acid chain: X-linked lymphocyte-regulated protein 3A (226 aa).

Residues 1 to 18 show a composition bias toward basic and acidic residues; that stretch reads MSSRERKATDTAGRHSRM. A disordered region spans residues 1 to 72; it reads MSSRERKATD…QDLVQEFEEP (72 aa). Polar residues predominate over residues 21–30; sequence NLSSDDSQNP. Basic and acidic residues-rich tracts occupy residues 39-48 and 56-65; these read EVLDAGREDI and QQARKEKQDL. Residues 155 to 210 adopt a coiled-coil conformation; it reads ETLTLQKNRMEEFKSLCEKYLEKLEVLRDSRGNSIAEELRRLIATLEIKLLMLHNQ.

This sequence belongs to the XLR/SYCP3 family. As to expression, expressed in lymphoid cells.

In Mus musculus (Mouse), this protein is X-linked lymphocyte-regulated protein 3A (Xlr3a).